The following is a 97-amino-acid chain: Large ribosomal subunit protein bL28 (97 aa).

It belongs to the bacterial ribosomal protein bL28 family.

The protein is Large ribosomal subunit protein bL28 of Rickettsia peacockii (strain Rustic).